The following is a 638-amino-acid chain: MYKEKYFEELKKEFNSEDEIVTEIVNLEAILNLPKGTEYFISDIHGEYDGLNHILKTGAGIIREKINDCFPEMNETEKNELNFTVAYPKYALEKRQLEQDAEELTQWYFGMITRMIGLTQFCASKYSRSKVRKSLPPKYAYIIEELLYVEGSPKNKQKYYEQIISKIIELDRAQDLIQSLAGTIQKMVIDHIHIVGDVFDRGRKSNQVLELLEHAHSLDFQWGNHDVLWLGGYAGSQACIATLFRIATRYGYIYDLEREYGINLRALFTFATQHYQANPAFYPKAGDFDQNNLDLLSQVHQALTIIQFKLEGQVIKRQPEFQMDDRLFLDEVQQGKIQLGDQEYPLENGCFQMVDADHPYELTKEEQEVIDSLSYSFRHSPKIKVHVNFILEKGSMYLIYNNNLLYHGCIPLTEDGDFDQFEYHGQKYAGKDLLTFFERHIRAGAAKKTSDEDDDTDLMWYCWIGKKSPLFGRTAMTTFERYFIADSATHKEGDNPYFKLRDRLSTAHYILRKFGLDERNSYIINGHTPVKVSEGESPIKGGGQIIVIDGGLSKAYQKSTGIAGYTLINNSYGFQIVTHMPFQGIDDLYESQTQSTSLKRIIDRDLPRRNIADTTIGTELKRQVDDLKYLLETDEISH.

Belongs to the FBPase class 3 family. Requires Mn(2+) as cofactor.

The catalysed reaction is beta-D-fructose 1,6-bisphosphate + H2O = beta-D-fructose 6-phosphate + phosphate. It participates in carbohydrate biosynthesis; gluconeogenesis. The polypeptide is Fructose-1,6-bisphosphatase class 3 (Pediococcus pentosaceus (strain ATCC 25745 / CCUG 21536 / LMG 10740 / 183-1w)).